The chain runs to 150 residues: 3-dehydroquinate dehydratase (150 aa).

The active-site Proton acceptor is the Tyr-26. The substrate site is built by Asn-77, His-83, and Asp-90. His-103 acts as the Proton donor in catalysis. Substrate contacts are provided by residues 104–105 (LS) and Arg-114.

This sequence belongs to the type-II 3-dehydroquinase family. In terms of assembly, homododecamer.

It carries out the reaction 3-dehydroquinate = 3-dehydroshikimate + H2O. It participates in metabolic intermediate biosynthesis; chorismate biosynthesis; chorismate from D-erythrose 4-phosphate and phosphoenolpyruvate: step 3/7. Functionally, catalyzes a trans-dehydration via an enolate intermediate. The polypeptide is 3-dehydroquinate dehydratase (Enterobacter sp. (strain 638)).